Reading from the N-terminus, the 266-residue chain is Short-chain dehydrogenase/reductase atnB (266 aa).

3 residues coordinate NADP(+): Ile13, Asp57, and Asn85. Catalysis depends on proton donor residues Ser147 and Tyr166. 4 residues coordinate NADP(+): Tyr166, Lys170, Val199, and Thr201. Lys170 serves as the catalytic Lowers pKa of active site Tyr.

It belongs to the short-chain dehydrogenases/reductases (SDR) family.

It participates in secondary metabolite biosynthesis; terpenoid biosynthesis. Its function is as follows. Short-chain dehydrogenase/reductase; part of the gene cluster that mediates the biosynthesis of the meroterpenoids arthripenoids. The pathway begins with the HR-PKS atnH that catalyzes two chain-extension steps to form a reduced triketide, which then primes the SAT domain in the NR-PKS atnG to initiate three more cycles of extension to give a linear hexaketide corresponding to the polyketide part of arthripenoids. The FAD-dependent monooxygenase atnJ then performs an oxidative decarboxylation at C11 of the atnH/atnG product, via an electrophilic aromatic hydroxylation with concomitant ipso-decarboxylation. The membrane-bound polyprenyl transferase atnF then introduces a farnesyl group before the FAD-dependent monooxygenase atnK functions as the first epoxidase on terminal C12'-C13' olefin, followed by a second epoxidation on C7'-C8' catalyzed by atnA. The terpene cyclase/mutase atnI then initiates the sequential tricyclic ring formation through protonation of the terminal epoxide and catalyzes the regioselective and stereoselective 6/6/6-tricyclic ring formation. The cytochrome P450 monooxygenase atnM is responsible for hydroxylating both C1' and C10'. The next steps may involve ketoreduction and acetyl transfer by the ketoreductase atnB and the acetyltransferase atnC, and lead to the production of arthripenoid B, the final biosynthetic product of the atn cluster. The hydroquinone moiety in arthripenoid B is prone to undergo spontaneous oxidation to afford a benzoquinone compound, a key intermediate for generating structure diversity. For instance, addition of a cysteine followed by ring contraction gives arthripenoid A, tautomerization gives the main product arthripenoid C, addition of a molecular of water or amine affords arthripenoid D or E, respectively, and loss of one water forms arthripenoid F. This chain is Short-chain dehydrogenase/reductase atnB, found in Arthrinium sp.